Consider the following 207-residue polypeptide: Nuclear transcription factor Y subunit beta (207 aa).

Residues 1–52 (MTMDGDSSTTDASQLGISADYIGGSHYVIQPHDDTEDSMNDHEDTNGSKESF) form an a domain region. Residues 27–52 (YVIQPHDDTEDSMNDHEDTNGSKESF) are disordered. The segment covering 39-52 (MNDHEDTNGSKESF) has biased composition (basic and acidic residues). Residues 53-142 (REQDIYLPIA…PLKLYLQKFR (90 aa)) form a b domain region. A DNA-binding region spans residues 59–65 (LPIANVA). The segment at 86–97 (VQECVSEFISFI) is subunit association domain (SAD). Lysine 140 participates in a covalent cross-link: Glycyl lysine isopeptide (Lys-Gly) (interchain with G-Cter in ubiquitin). The segment at 143–207 (EAMKGEKGIG…ISGVQQIQFS (65 aa)) is c domain.

The protein belongs to the NFYB/HAP3 subunit family. As to quaternary structure, heterotrimeric transcription factor composed of three components, NF-YA, NF-YB and NF-YC. NF-YB and NF-YC must interact and dimerize for NF-YA association and DNA binding. Interacts with C1QBP. Monoubiquitination at Lys-140 plays an important role in transcriptional activation by allowing the deposition of histone H3 methylations as well as histone H2B monoubiquitination at 'Lys-121'.

The protein resides in the nucleus. Functionally, component of the sequence-specific heterotrimeric transcription factor (NF-Y) which specifically recognizes a 5'-CCAAT-3' box motif found in the promoters of its target genes. NF-Y can function as both an activator and a repressor, depending on its interacting cofactors. This chain is Nuclear transcription factor Y subunit beta (NFYB), found in Homo sapiens (Human).